Consider the following 293-residue polypeptide: Diaminopimelate epimerase (293 aa).

Substrate-binding residues include asparagine 17, glutamine 47, and asparagine 67. The Proton donor role is filled by cysteine 76. Residues glycine 77–asparagine 78, asparagine 164, asparagine 197, and glutamate 215–arginine 216 each bind substrate. Cysteine 224 functions as the Proton acceptor in the catalytic mechanism. Glycine 225–serine 226 is a substrate binding site.

Belongs to the diaminopimelate epimerase family. In terms of assembly, homodimer.

It is found in the cytoplasm. The enzyme catalyses (2S,6S)-2,6-diaminopimelate = meso-2,6-diaminopimelate. Its pathway is amino-acid biosynthesis; L-lysine biosynthesis via DAP pathway; DL-2,6-diaminopimelate from LL-2,6-diaminopimelate: step 1/1. Functionally, catalyzes the stereoinversion of LL-2,6-diaminopimelate (L,L-DAP) to meso-diaminopimelate (meso-DAP), a precursor of L-lysine and an essential component of the bacterial peptidoglycan. The sequence is that of Diaminopimelate epimerase from Rhodopseudomonas palustris (strain TIE-1).